A 1001-amino-acid chain; its full sequence is Phosphoenolpyruvate carboxylase (1001 aa).

Active-site residues include His189 and Lys642.

It belongs to the PEPCase type 1 family. Mg(2+) is required as a cofactor.

It catalyses the reaction oxaloacetate + phosphate = phosphoenolpyruvate + hydrogencarbonate. Functionally, forms oxaloacetate, a four-carbon dicarboxylic acid source for the tricarboxylic acid cycle. The polypeptide is Phosphoenolpyruvate carboxylase (Prochlorococcus marinus (strain SARG / CCMP1375 / SS120)).